The primary structure comprises 177 residues: NADH-quinone oxidoreductase subunit B (177 aa).

Cysteine 56, cysteine 57, cysteine 121, and cysteine 151 together coordinate [4Fe-4S] cluster.

Belongs to the complex I 20 kDa subunit family. As to quaternary structure, NDH-1 is composed of 14 different subunits. Subunits NuoB, C, D, E, F, and G constitute the peripheral sector of the complex. [4Fe-4S] cluster is required as a cofactor.

Its subcellular location is the cell inner membrane. It carries out the reaction a quinone + NADH + 5 H(+)(in) = a quinol + NAD(+) + 4 H(+)(out). In terms of biological role, NDH-1 shuttles electrons from NADH, via FMN and iron-sulfur (Fe-S) centers, to quinones in the respiratory chain. Couples the redox reaction to proton translocation (for every two electrons transferred, four hydrogen ions are translocated across the cytoplasmic membrane), and thus conserves the redox energy in a proton gradient. The polypeptide is NADH-quinone oxidoreductase subunit B (Sphingopyxis alaskensis (strain DSM 13593 / LMG 18877 / RB2256) (Sphingomonas alaskensis)).